The following is a 132-amino-acid chain: Fatty acid-binding protein, brain (132 aa).

Residue valine 2 is modified to N-acetylvaline. 127-129 (RHY) is a binding site for a fatty acid.

This sequence belongs to the calycin superfamily. Fatty-acid binding protein (FABP) family. As to expression, expressed in brain and other neural tissues.

The protein localises to the cytoplasm. Its function is as follows. B-FABP could be involved in the transport of a so far unknown hydrophobic ligand with potential morphogenic activity during CNS development. It is required for the establishment of the radial glial fiber system in developing brain, a system that is necessary for the migration of immature neurons to establish cortical layers. The protein is Fatty acid-binding protein, brain (FABP7) of Homo sapiens (Human).